Reading from the N-terminus, the 160-residue chain is Cytochrome b6-f complex subunit 4 (160 aa).

3 consecutive transmembrane segments (helical) span residues 36 to 56, 95 to 115, and 128 to 148; these read LLYIFPVVILGTIACIVGLSV, LLGIALQTLVPLGLMLIPFIE, and IAMAVFLFGTATTIYLGIGAA.

This sequence belongs to the cytochrome b family. PetD subfamily. As to quaternary structure, the 4 large subunits of the cytochrome b6-f complex are cytochrome b6, subunit IV (17 kDa polypeptide, PetD), cytochrome f and the Rieske protein, while the 4 small subunits are PetG, PetL, PetM and PetN. The complex functions as a dimer.

It localises to the cellular thylakoid membrane. Its function is as follows. Component of the cytochrome b6-f complex, which mediates electron transfer between photosystem II (PSII) and photosystem I (PSI), cyclic electron flow around PSI, and state transitions. This is Cytochrome b6-f complex subunit 4 from Synechococcus sp. (strain CC9311).